Consider the following 202-residue polypeptide: Na(+)-translocating NADH-quinone reductase subunit E (202 aa).

6 consecutive transmembrane segments (helical) span residues 11–31, 41–61, 81–101, 114–134, 144–164, and 180–200; these read SIFMENMALAFFLGMCTFLAV, LGVAVIVVLGISVPVNQIIYF, FLGFITFIGVIAALVQILEMV, GIYLPLITVNCAILGGVLFMV, LVYGVGSGVGWMLAIVLLAGI, and LGITFTTAGLMAIAFMSFSGI.

Belongs to the NqrDE/RnfAE family. In terms of assembly, composed of six subunits; NqrA, NqrB, NqrC, NqrD, NqrE and NqrF.

Its subcellular location is the cell inner membrane. The enzyme catalyses a ubiquinone + n Na(+)(in) + NADH + H(+) = a ubiquinol + n Na(+)(out) + NAD(+). Functionally, NQR complex catalyzes the reduction of ubiquinone-1 to ubiquinol by two successive reactions, coupled with the transport of Na(+) ions from the cytoplasm to the periplasm. NqrA to NqrE are probably involved in the second step, the conversion of ubisemiquinone to ubiquinol. The polypeptide is Na(+)-translocating NADH-quinone reductase subunit E (Psychromonas ingrahamii (strain DSM 17664 / CCUG 51855 / 37)).